Reading from the N-terminus, the 193-residue chain is Potassium-transporting ATPase KdpC subunit (193 aa).

Residues 9–29 form a helical membrane-spanning segment; sequence VLMTVVTTVLLGLVYPLLITG.

This sequence belongs to the KdpC family. The system is composed of three essential subunits: KdpA, KdpB and KdpC.

It is found in the cell inner membrane. Functionally, part of the high-affinity ATP-driven potassium transport (or Kdp) system, which catalyzes the hydrolysis of ATP coupled with the electrogenic transport of potassium into the cytoplasm. This subunit acts as a catalytic chaperone that increases the ATP-binding affinity of the ATP-hydrolyzing subunit KdpB by the formation of a transient KdpB/KdpC/ATP ternary complex. This chain is Potassium-transporting ATPase KdpC subunit, found in Koribacter versatilis (strain Ellin345).